We begin with the raw amino-acid sequence, 822 residues long: AP-1 complex subunit gamma-1 (822 aa).

Residues 593–604 (NGPSEIVQTNGE) are compositionally biased toward polar residues. The interval 593-627 (NGPSEIVQTNGETEPAPLETKPPPSGPQPTSQAND) is disordered. Residues 702 to 817 (PGIPSITAYS…QDLAEVNNFP (116 aa)) form the GAE domain.

The protein belongs to the adaptor complexes large subunit family. Adaptor protein complex 1 (AP-1) is a heterotetramer composed of two large adaptins (gamma-type subunit AP1G1 and beta-type subunit AP1B1), a medium adaptin (mu-type subunit AP1M1 or AP1M2) and a small adaptin (sigma-type subunit AP1S1 or AP1S2 or AP1S3). Interacts (via GAE domain) with RABEP1. Interacts with EPS15. Interacts with SYNRG/gamma-synergin. Interacts (via GAE domain) with AP1AR (via coiled-coil domain). Interacts with CLN3 (via dileucine motif); this interaction facilitates lysosomal targeting. Interacts (via GAE domain) with AFTPH/aftiphilin; the interaction is required to recruit AFTPH/aftiphilin to the perinuclear region of the cell. Widely expressed.

It localises to the golgi apparatus. It is found in the cytoplasmic vesicle. The protein resides in the clathrin-coated vesicle membrane. The protein localises to the cytoplasm. Its subcellular location is the perinuclear region. It localises to the clathrin-coated vesicle. It is found in the membrane. The protein resides in the clathrin-coated pit. Its function is as follows. Subunit of clathrin-associated adaptor protein complex 1 that plays a role in protein sorting in the late-Golgi/trans-Golgi network (TGN) and/or endosomes. The AP complexes mediate both the recruitment of clathrin to membranes and the recognition of sorting signals within the cytosolic tails of transmembrane cargo molecules. In association with AFTPH/aftiphilin in the aftiphilin/p200/gamma-synergin complex, involved in the trafficking of transferrin from early to recycling endosomes, and the membrane trafficking of furin and the lysosomal enzyme cathepsin D between the trans-Golgi network (TGN) and endosomes. The polypeptide is AP-1 complex subunit gamma-1 (Ap1g1) (Mus musculus (Mouse)).